A 322-amino-acid polypeptide reads, in one-letter code: Acetyl-coenzyme A carboxylase carboxyl transferase subunit alpha (322 aa).

A CoA carboxyltransferase C-terminal domain is found at 32–293 (DISEEIARLE…KRALQDALRQ (262 aa)).

The protein belongs to the AccA family. As to quaternary structure, acetyl-CoA carboxylase is a heterohexamer composed of biotin carboxyl carrier protein (AccB), biotin carboxylase (AccC) and two subunits each of ACCase subunit alpha (AccA) and ACCase subunit beta (AccD).

The protein localises to the cytoplasm. It carries out the reaction N(6)-carboxybiotinyl-L-lysyl-[protein] + acetyl-CoA = N(6)-biotinyl-L-lysyl-[protein] + malonyl-CoA. The protein operates within lipid metabolism; malonyl-CoA biosynthesis; malonyl-CoA from acetyl-CoA: step 1/1. Functionally, component of the acetyl coenzyme A carboxylase (ACC) complex. First, biotin carboxylase catalyzes the carboxylation of biotin on its carrier protein (BCCP) and then the CO(2) group is transferred by the carboxyltransferase to acetyl-CoA to form malonyl-CoA. The sequence is that of Acetyl-coenzyme A carboxylase carboxyl transferase subunit alpha from Aromatoleum aromaticum (strain DSM 19018 / LMG 30748 / EbN1) (Azoarcus sp. (strain EbN1)).